A 173-amino-acid polypeptide reads, in one-letter code: Crossover junction endodeoxyribonuclease RuvC (173 aa).

Residues Asp-10, Glu-71, and Asp-143 contribute to the active site. Mg(2+) is bound by residues Asp-10, Glu-71, and Asp-143.

Belongs to the RuvC family. In terms of assembly, homodimer which binds Holliday junction (HJ) DNA. The HJ becomes 2-fold symmetrical on binding to RuvC with unstacked arms; it has a different conformation from HJ DNA in complex with RuvA. In the full resolvosome a probable DNA-RuvA(4)-RuvB(12)-RuvC(2) complex forms which resolves the HJ. The cofactor is Mg(2+).

The protein localises to the cytoplasm. The enzyme catalyses Endonucleolytic cleavage at a junction such as a reciprocal single-stranded crossover between two homologous DNA duplexes (Holliday junction).. In terms of biological role, the RuvA-RuvB-RuvC complex processes Holliday junction (HJ) DNA during genetic recombination and DNA repair. Endonuclease that resolves HJ intermediates. Cleaves cruciform DNA by making single-stranded nicks across the HJ at symmetrical positions within the homologous arms, yielding a 5'-phosphate and a 3'-hydroxyl group; requires a central core of homology in the junction. The consensus cleavage sequence is 5'-(A/T)TT(C/G)-3'. Cleavage occurs on the 3'-side of the TT dinucleotide at the point of strand exchange. HJ branch migration catalyzed by RuvA-RuvB allows RuvC to scan DNA until it finds its consensus sequence, where it cleaves and resolves the cruciform DNA. This chain is Crossover junction endodeoxyribonuclease RuvC, found in Gloeobacter violaceus (strain ATCC 29082 / PCC 7421).